The following is a 732-amino-acid chain: S-adenosyl-L-methionine-dependent tRNA 4-demethylwyosine synthase TYW1 (732 aa).

The 159-residue stretch at V79–I237 folds into the Flavodoxin-like domain. FMN-binding positions include S85–T89 and V176–M208. Residues R248–V314 form a disordered region. Positions G259–T286 are enriched in basic and acidic residues. The span at E287 to G301 shows a compositional bias: acidic residues. The Radical SAM core domain occupies Y400–A644. [4Fe-4S] cluster-binding residues include C416, C420, and C423.

It belongs to the TYW1 family. [4Fe-4S] cluster serves as cofactor.

It catalyses the reaction N(1)-methylguanosine(37) in tRNA(Phe) + pyruvate + S-adenosyl-L-methionine = 4-demethylwyosine(37) in tRNA(Phe) + 5'-deoxyadenosine + L-methionine + CO2 + H2O. It functions in the pathway tRNA modification; wybutosine-tRNA(Phe) biosynthesis. In terms of biological role, probable component of the wybutosine biosynthesis pathway. Wybutosine is a hyper modified guanosine with a tricyclic base found at the 3'-position adjacent to the anticodon of eukaryotic phenylalanine tRNA. Catalyzes the condensation of N-methylguanine with 2 carbon atoms from pyruvate to form the tricyclic 4-demethylwyosine, an intermediate in wybutosine biosynthesis. This Homo sapiens (Human) protein is S-adenosyl-L-methionine-dependent tRNA 4-demethylwyosine synthase TYW1 (TYW1).